The chain runs to 587 residues: Potassium-transporting ATPase potassium-binding subunit (587 aa).

Helical transmembrane passes span 1-21, 60-80, 89-109, and 131-151; these read MSTS…LWVT, PVYA…LYLL, LNLG…VSFM, and GLAV…IAVV. Residues 162–188 are disordered; sequence AVGGPGGPNGPGGPGGPNGPGAGSRDD. The segment covering 164 to 183 has biased composition (gly residues); that stretch reads GGPGGPNGPGGPGGPNGPGA. The next 7 helical transmembrane spans lie at 208–228, 280–300, 314–334, 409–429, 449–469, 514–534, and 557–577; these read IRIL…GGAI, PTSW…FSLP, LAIV…NAAF, GLYG…LMIG, LYFL…MGLP, ALGL…LGMA, and FAGM…FPAL.

It belongs to the KdpA family. As to quaternary structure, the system is composed of three essential subunits: KdpA, KdpB and KdpC.

It is found in the cell membrane. In terms of biological role, part of the high-affinity ATP-driven potassium transport (or Kdp) system, which catalyzes the hydrolysis of ATP coupled with the electrogenic transport of potassium into the cytoplasm. This subunit binds the extracellular potassium ions and delivers the ions to the membrane domain of KdpB through an intramembrane tunnel. This chain is Potassium-transporting ATPase potassium-binding subunit, found in Frankia alni (strain DSM 45986 / CECT 9034 / ACN14a).